A 412-amino-acid chain; its full sequence is Trehalose synthase (412 aa).

It belongs to the glycosyltransferase group 1 family. Glycosyltransferase 4 subfamily. Homodimer. Mg(2+) is required as a cofactor.

It carries out the reaction an NDP-alpha-D-glucose + D-glucose = alpha,alpha-trehalose + a ribonucleoside 5'-diphosphate + H(+). Its function is as follows. Synthesizes trehalose from ADP-glucose and glucose. Has a much lower activity toward UDP-glucose and GDP-glucose. The reaction is reversible, the equilibrium strongly favors trehalose synthesis. In Pyrococcus furiosus (strain ATCC 43587 / DSM 3638 / JCM 8422 / Vc1), this protein is Trehalose synthase.